The chain runs to 277 residues: Methylamine utilization protein MauF (277 aa).

7 consecutive transmembrane segments (helical) span residues 33-53 (IAVL…LASA), 59-79 (LWAV…WSPC), 111-131 (YGLG…IAGF), 132-152 (SGFG…YGAH), 179-199 (WVIG…YVQT), 205-225 (MTLA…VALF), and 257-277 (ALAD…LALI).

Its subcellular location is the cell membrane. It participates in one-carbon metabolism; methylamine degradation. The sequence is that of Methylamine utilization protein MauF (mauF) from Paracoccus denitrificans.